Here is a 142-residue protein sequence, read N- to C-terminus: Large ribosomal subunit protein uL23 (142 aa).

It belongs to the universal ribosomal protein uL23 family.

This chain is Large ribosomal subunit protein uL23 (RPL25), found in Kluyveromyces lactis (strain ATCC 8585 / CBS 2359 / DSM 70799 / NBRC 1267 / NRRL Y-1140 / WM37) (Yeast).